The primary structure comprises 315 residues: Zinc finger protein 691 (315 aa).

Positions 1–10 (MSLCSPTHSA) are enriched in polar residues. Positions 1–90 (MSLCSPTHSA…QETHPKKPWQ (90 aa)) are disordered. The segment covering 33 to 58 (GSEKEQSPEPHLPEEGEGGKPWRVDD) has biased composition (basic and acidic residues). Phosphoserine is present on residues S39, S75, and S77. Residue K113 forms a Glycyl lysine isopeptide (Lys-Gly) (interchain with G-Cter in SUMO2) linkage. 7 consecutive C2H2-type zinc fingers follow at residues 115–137 (FICA…QRIH), 143–165 (YKCS…ERIH), 171–193 (YKCP…QQDH), 199–221 (YRCD…HRTH), 227–249 (YICC…HRTH), 255–277 (YECT…QRTH), and 283–305 (YRCT…QKTH).

Belongs to the krueppel C2H2-type zinc-finger protein family.

Its subcellular location is the nucleus. May be involved in transcriptional regulation. The protein is Zinc finger protein 691 (ZNF691) of Homo sapiens (Human).